The primary structure comprises 799 residues: Histidine biosynthesis trifunctional protein (799 aa).

Residues 1–229 (MVLPILPLID…FIVEQENVGF (229 aa)) are phosphoribosyl-AMP cyclohydrolase. Residues 230–312 (CHLETMSCFG…FYFALAKLVA (83 aa)) form a phosphoribosyl-ATP pyrophosphohydrolase region. The tract at residues 313–799 (NDVSLKDVEN…KLGLIPKDFQ (487 aa)) is histidinol dehydrogenase. Residues glutamine 618 and histidine 621 each contribute to the Zn(2+) site. Catalysis depends on residues glutamate 687 and histidine 688. Residues aspartate 721 and histidine 780 each contribute to the Zn(2+) site.

In the C-terminal section; belongs to the histidinol dehydrogenase family. Requires Zn(2+) as cofactor.

The enzyme catalyses 1-(5-phospho-beta-D-ribosyl)-5'-AMP + H2O = 1-(5-phospho-beta-D-ribosyl)-5-[(5-phospho-beta-D-ribosylamino)methylideneamino]imidazole-4-carboxamide. The catalysed reaction is 1-(5-phospho-beta-D-ribosyl)-ATP + H2O = 1-(5-phospho-beta-D-ribosyl)-5'-AMP + diphosphate + H(+). It catalyses the reaction L-histidinol + 2 NAD(+) + H2O = L-histidine + 2 NADH + 3 H(+). It participates in amino-acid biosynthesis; L-histidine biosynthesis; L-histidine from 5-phospho-alpha-D-ribose 1-diphosphate: step 2/9. It functions in the pathway amino-acid biosynthesis; L-histidine biosynthesis; L-histidine from 5-phospho-alpha-D-ribose 1-diphosphate: step 3/9. The protein operates within amino-acid biosynthesis; L-histidine biosynthesis; L-histidine from 5-phospho-alpha-D-ribose 1-diphosphate: step 9/9. The sequence is that of Histidine biosynthesis trifunctional protein from Saccharomyces cerevisiae (strain ATCC 204508 / S288c) (Baker's yeast).